We begin with the raw amino-acid sequence, 445 residues long: Beclin-1 (445 aa).

The BH3 signature appears at 103–122; that stretch reads TMENLSRRLKVTGDLFDIMS. A coiled-coil region spans residues 137–264; it reads DTLLDQLDTQ…QLDKLKKTNV (128 aa). An evolutionary conserved domain (ECD) region spans residues 240-445; it reads DDLKSVENQM…AWVSSQFYNK (206 aa). A required for membrane-association region spans residues 420–445; sequence WTKALKFMLTNLKWGLAWVSSQFYNK.

This sequence belongs to the beclin family. Component of the PI3K (PI3KC3/PI3K-III/class III phosphatidylinositol 3-kinase) complex. In terms of processing, may be proteolytically processed by caspases; the C-terminal fragment(s) may induce apoptosis.

Its subcellular location is the cytoplasm. The protein localises to the golgi apparatus. The protein resides in the trans-Golgi network membrane. It is found in the endosome membrane. It localises to the endoplasmic reticulum membrane. Its subcellular location is the mitochondrion membrane. The protein localises to the cytoplasmic vesicle. The protein resides in the autophagosome. Functionally, plays a central role in autophagy. Acts as core subunit of different PI3K complex forms that mediate formation of phosphatidylinositol 3-phosphate and are believed to play a role in multiple membrane trafficking pathways: PI3KC3-C1 is involved in initiation of autophagosomes and PI3KC3-C2 in maturation of autophagosomes and endocytosis. Involved in regulation of degradative endocytic trafficking and required for the abscission step in cytokinesis, probably in the context of PI3KC3-C2. Essential for the formation of PI3KC3-C2 but not PI3KC3-C1 PI3K complex forms. Involved in endocytosis including endosome formation in neuronal cells. This chain is Beclin-1 (becn1), found in Xenopus laevis (African clawed frog).